A 327-amino-acid chain; its full sequence is Aldo/keto reductase slr0942 (327 aa).

18 to 27 lines the NADP(+) pocket; that stretch reads GEQIPALGLG. Tyrosine 57 acts as the Proton donor in catalysis. Residue histidine 119 coordinates substrate. 216–280 contributes to the NADP(+) binding site; the sequence is SPLGSGDRPA…SVNPERLEQN (65 aa).

It belongs to the aldo/keto reductase family. Monomer.

It catalyses the reaction a secondary alcohol + NADP(+) = a ketone + NADPH + H(+). With respect to regulation, curcumin non-competitively inhibits the enzyme with respect to furfural. To a lesser extent, enzyme activity is also inhibited by indomethacin, coumarate, coumarin, and alrestatin. In terms of biological role, aldo/keto reductase with broad substrate spectrum. Catalyzes the NADPH-dependent reduction of aldehyde- and ketone-groups of different classes of carbonyl compounds to the corresponding alcohols. Highest enzymatic efficiency is observed with 4-oxonon-2-enal (4-ONE) and 4-hydroxynon-2-enal (4-HNE), that are lipid peroxidation products, and 9,10-phenanthrenequinone (9,10-PQ), a photoproduct of phenanthrene that is one of the most prevalent polycyclic aromatic hydrocarbons in the environment. Is also active on sugar-derived reactive carbonyls such as methylglyoxal (MG), glyoxal and 3-deoxyglucosone (3-DG), and on other lipid-derived carbonyls such as acrolein. May be involved in the detoxification of the toxic lipid peroxidation products 4-ONE and 4-HNE besides many other exo- and endogenic reactive carbonyl compounds (RCs) that may lead to photoinhibition or other cell damages. The chain is Aldo/keto reductase slr0942 from Synechocystis sp. (strain ATCC 27184 / PCC 6803 / Kazusa).